Consider the following 261-residue polypeptide: Phosphatidylglycerol--prolipoprotein diacylglyceryl transferase (261 aa).

4 helical membrane passes run 12–32, 41–61, 87–107, and 112–132; these read ISIR…VYLA, IIPD…IVGA, GIAG…LYFF, and LIHP…AQSI. An a 1,2-diacyl-sn-glycero-3-phospho-(1'-sn-glycerol)-binding site is contributed by Arg134. 3 helical membrane passes run 170 to 190, 200 to 220, and 229 to 249; these read QPTF…IIVL, GEIA…IEGM, and GLRV…GIII.

Belongs to the Lgt family.

It localises to the cell membrane. The enzyme catalyses L-cysteinyl-[prolipoprotein] + a 1,2-diacyl-sn-glycero-3-phospho-(1'-sn-glycerol) = an S-1,2-diacyl-sn-glyceryl-L-cysteinyl-[prolipoprotein] + sn-glycerol 1-phosphate + H(+). The protein operates within protein modification; lipoprotein biosynthesis (diacylglyceryl transfer). In terms of biological role, catalyzes the transfer of the diacylglyceryl group from phosphatidylglycerol to the sulfhydryl group of the N-terminal cysteine of a prolipoprotein, the first step in the formation of mature lipoproteins. This chain is Phosphatidylglycerol--prolipoprotein diacylglyceryl transferase, found in Streptococcus sanguinis (strain SK36).